The following is an 87-amino-acid chain: Exendin-4 (87 aa).

A signal peptide spans Met-1 to Gln-23. A propeptide spanning residues Met-24–Ile-45 is cleaved from the precursor. Position 86 is a serine amide (Ser-86).

It belongs to the glucagon family. Expressed by the venom gland.

Its subcellular location is the secreted. Functionally, venom protein that mimics the incretin hormone glucagon-like peptide 1 (GLP-1). It stimulates insulin synthesis and secretion, protects against beta-cell apoptosis in response to different insults, and promotes beta-cell proliferation It also promotes satiety, reduces food intake, reduces fat deposition, reduces body weight and inhibits gastric emptying. Interacts with GLP-1 receptor (GLP1R). Induces hypotension that is mediated by relaxation of cardiac smooth muscle. In Heloderma suspectum cinctum (Banded Gila monster), this protein is Exendin-4.